The sequence spans 104 residues: ATP synthase subunit c (104 aa).

Transmembrane regions (helical) follow at residues 37-57 (LLGAGVAIIGVAGAGIGQGAV) and 83-103 (AGIAESGAIYALVVAILLIFV).

This sequence belongs to the ATPase C chain family. As to quaternary structure, F-type ATPases have 2 components, F(1) - the catalytic core - and F(0) - the membrane proton channel. F(1) has five subunits: alpha(3), beta(3), gamma(1), delta(1), epsilon(1). F(0) has three main subunits: a(1), b(2) and c(10-14). The alpha and beta chains form an alternating ring which encloses part of the gamma chain. F(1) is attached to F(0) by a central stalk formed by the gamma and epsilon chains, while a peripheral stalk is formed by the delta and b chains.

It is found in the cell membrane. F(1)F(0) ATP synthase produces ATP from ADP in the presence of a proton or sodium gradient. F-type ATPases consist of two structural domains, F(1) containing the extramembraneous catalytic core and F(0) containing the membrane proton channel, linked together by a central stalk and a peripheral stalk. During catalysis, ATP synthesis in the catalytic domain of F(1) is coupled via a rotary mechanism of the central stalk subunits to proton translocation. Functionally, key component of the F(0) channel; it plays a direct role in translocation across the membrane. A homomeric c-ring of between 10-14 subunits forms the central stalk rotor element with the F(1) delta and epsilon subunits. The polypeptide is ATP synthase subunit c (Mesoplasma florum (strain ATCC 33453 / NBRC 100688 / NCTC 11704 / L1) (Acholeplasma florum)).